A 961-amino-acid chain; its full sequence is Leucine--tRNA ligase (961 aa).

The 'HIGH' region motif lies at 41–51 (PYLNGNLHAGH). Residues 632-636 (KMSKS) carry the 'KMSKS' region motif. Residue lysine 635 participates in ATP binding.

The protein belongs to the class-I aminoacyl-tRNA synthetase family.

It localises to the cytoplasm. It catalyses the reaction tRNA(Leu) + L-leucine + ATP = L-leucyl-tRNA(Leu) + AMP + diphosphate. This Methanosarcina acetivorans (strain ATCC 35395 / DSM 2834 / JCM 12185 / C2A) protein is Leucine--tRNA ligase.